Reading from the N-terminus, the 107-residue chain is Ig kappa chain V-VI region NQ6-8.3.1 (107 aa).

The tract at residues 1-23 (QIVLTQSPAIMSASPGQKVTMTC) is framework-1. Cysteines 23 and 87 form a disulfide. The interval 24–33 (SASSSVSYMH) is complementarity-determining-1. The segment at 34–48 (WYQQKSGTSPKRWIY) is framework-2. Positions 49–55 (DTSKLAS) are complementarity-determining-2. The interval 56–87 (GXPARFSGSGSATSYSLTITSMQAEDAATYYC) is framework-3. The tract at residues 88 to 96 (QQWSSNPLT) is complementarity-determining-3. Residues 97–106 (FGAGTKLELK) form a framework-4 region.

Its function is as follows. Anti-2-phenyl oxazolone (PHOX) Antibody. The chain is Ig kappa chain V-VI region NQ6-8.3.1 from Mus musculus (Mouse).